Reading from the N-terminus, the 342-residue chain is Adenylate isopentenyltransferase 6, chloroplastic (342 aa).

The N-terminal 33 residues, 1 to 33 (MQQLMTLLSPPLSHSSLLPTVTTKFGSPRLVTT), are a transit peptide targeting the chloroplast. 52 to 59 (GTTGTGKS) lines the ATP pocket.

Belongs to the IPP transferase family. As to expression, expressed in siliques, at the mRNA level.

It is found in the plastid. Its subcellular location is the chloroplast. The catalysed reaction is dimethylallyl diphosphate + ADP = N(6)-(dimethylallyl)adenosine 5'-diphosphate + diphosphate. It catalyses the reaction dimethylallyl diphosphate + ATP = N(6)-(dimethylallyl)adenosine 5'-triphosphate + diphosphate. Involved in cytokinin biosynthesis. Catalyzes the transfer of an isopentenyl group from dimethylallyl diphosphate (DMAPP) to ATP and ADP. The polypeptide is Adenylate isopentenyltransferase 6, chloroplastic (IPT6) (Arabidopsis thaliana (Mouse-ear cress)).